We begin with the raw amino-acid sequence, 196 residues long: Nucleoid occlusion factor SlmA (196 aa).

The HTH tetR-type domain maps to 7–68 (TNRREEILQA…GLIEFIEEAL (62 aa)). The H-T-H motif DNA-binding region spans 31–50 (TTAKLAKQVGVSEAALYRHF). Residues 110 to 142 (HALMFENERLRDRINQLFERIETQLRQILRERK) adopt a coiled-coil conformation.

Belongs to the nucleoid occlusion factor SlmA family. Homodimer. Interacts with FtsZ.

The protein localises to the cytoplasm. The protein resides in the nucleoid. Its function is as follows. Required for nucleoid occlusion (NO) phenomenon, which prevents Z-ring formation and cell division over the nucleoid. Acts as a DNA-associated cell division inhibitor that binds simultaneously chromosomal DNA and FtsZ, and disrupts the assembly of FtsZ polymers. SlmA-DNA-binding sequences (SBS) are dispersed on non-Ter regions of the chromosome, preventing FtsZ polymerization at these regions. In Vibrio campbellii (strain ATCC BAA-1116), this protein is Nucleoid occlusion factor SlmA.